We begin with the raw amino-acid sequence, 138 residues long: Large ribosomal subunit protein mL43 (138 aa).

The protein belongs to the mitochondrion-specific ribosomal protein mL43 family. Component of the mitochondrial large ribosomal subunit (mt-LSU). Mature N.crassa 74S mitochondrial ribosomes consist of a small (37S) and a large (54S) subunit. The 37S small subunit contains a 16S ribosomal RNA (16S mt-rRNA) and 32 different proteins. The 54S large subunit contains a 23S rRNA (23S mt-rRNA) and 42 different proteins.

It is found in the mitochondrion. Its function is as follows. Component of the mitochondrial ribosome (mitoribosome), a dedicated translation machinery responsible for the synthesis of mitochondrial genome-encoded proteins, including at least some of the essential transmembrane subunits of the mitochondrial respiratory chain. The mitoribosomes are attached to the mitochondrial inner membrane and translation products are cotranslationally integrated into the membrane. In Neurospora crassa (strain ATCC 24698 / 74-OR23-1A / CBS 708.71 / DSM 1257 / FGSC 987), this protein is Large ribosomal subunit protein mL43 (mrpl51).